Reading from the N-terminus, the 250-residue chain is Octanoyltransferase (250 aa).

One can recognise a BPL/LPL catalytic domain in the interval Asp49–Leu230. Substrate is bound by residues Arg87–His94, Ala160–Gly162, and Gly173–Ala175. The active-site Acyl-thioester intermediate is the Cys191.

This sequence belongs to the LipB family.

It localises to the cytoplasm. It carries out the reaction octanoyl-[ACP] + L-lysyl-[protein] = N(6)-octanoyl-L-lysyl-[protein] + holo-[ACP] + H(+). It functions in the pathway protein modification; protein lipoylation via endogenous pathway; protein N(6)-(lipoyl)lysine from octanoyl-[acyl-carrier-protein]: step 1/2. Functionally, catalyzes the transfer of endogenously produced octanoic acid from octanoyl-acyl-carrier-protein onto the lipoyl domains of lipoate-dependent enzymes. Lipoyl-ACP can also act as a substrate although octanoyl-ACP is likely to be the physiological substrate. This is Octanoyltransferase from Corynebacterium diphtheriae (strain ATCC 700971 / NCTC 13129 / Biotype gravis).